Here is a 475-residue protein sequence, read N- to C-terminus: UDP-N-acetylmuramoylalanine--D-glutamate ligase (475 aa).

130–136 (GTNGKTT) serves as a coordination point for ATP.

It belongs to the MurCDEF family.

It localises to the cytoplasm. The catalysed reaction is UDP-N-acetyl-alpha-D-muramoyl-L-alanine + D-glutamate + ATP = UDP-N-acetyl-alpha-D-muramoyl-L-alanyl-D-glutamate + ADP + phosphate + H(+). It functions in the pathway cell wall biogenesis; peptidoglycan biosynthesis. Its function is as follows. Cell wall formation. Catalyzes the addition of glutamate to the nucleotide precursor UDP-N-acetylmuramoyl-L-alanine (UMA). This Corynebacterium diphtheriae (strain ATCC 700971 / NCTC 13129 / Biotype gravis) protein is UDP-N-acetylmuramoylalanine--D-glutamate ligase.